Here is a 382-residue protein sequence, read N- to C-terminus: Apolipoprotein A-IV (382 aa).

Positions 1 to 20 (MFLRAVVLTLALVAVTGARA) are cleaved as a signal peptide. 13 repeat units span residues 33–54 (DYFSQLSNNAKEAVEHLQQSEL), 60–81 (ALFQDKLGQVNTYADNLQKKLV), 82–103 (PFATELHERLTKDSEKLKEEIR), 115–136 (PHANEVSQKIGDNVRELQQRLG), 137–158 (PYADELRTQVNTHAEHLRRHLT), 159–180 (SHAQRMEAVLRENVDNLQSSLT), 181–202 (PYADEFKAKIDRNIEELKGHLT), 203–224 (PYADELKVKIDQNVEELRRSLA), 225–246 (PYAQDVQEKLNHQLEGLAFQMK), 247–268 (KNAEELKAKITANADELRQRLA), 269–286 (PVVEDVRGKLRDNAKGLQ), 287–308 (ESLAQLNSHLDRQVEEFRHNMG), and 309–330 (PYGDTFNRALVQQVEELRQKLG). Residues 33-330 (DYFSQLSNNA…QVEELRQKLG (298 aa)) form a 13 X 22 AA approximate tandem repeats region. The tract at residues 362-382 (ENQDMPLALPEQEQAPGPLES) is disordered.

Belongs to the apolipoprotein A1/A4/E family. In terms of assembly, homodimer.

It is found in the secreted. Functionally, may have a role in chylomicrons and VLDL secretion and catabolism. Required for efficient activation of lipoprotein lipase by ApoC-II; potent activator of LCAT. Apoa-IV is a major component of HDL and chylomicrons. This chain is Apolipoprotein A-IV (APOA4), found in Acinonyx jubatus (Cheetah).